The following is a 746-amino-acid chain: NAD(P)H-quinone oxidoreductase subunit 5, chloroplastic (746 aa).

The next 16 helical transmembrane spans lie at 9–29 (WIIP…LLLF), 40–60 (WTFL…YLSI), 89–109 (IDPL…LVLI), 125–145 (FAYM…SNLI), 147–167 (VYFF…FWFT), 185–205 (GDFG…SFEF), 221–241 (VNLL…IAKS), 258–278 (TPIS…FLVA), 280–300 (LLPL…IGII), 327–347 (LGYM…FHLI), 354–374 (ALLF…VGYS), 396–416 (IAFL…CFWS), 425–445 (LLFS…TAFY), 547–567 (ILFP…IGIP), 608–628 (FSVS…KPFY), and 723–743 (YLFL…FFYF).

This sequence belongs to the complex I subunit 5 family. As to quaternary structure, NDH is composed of at least 16 different subunits, 5 of which are encoded in the nucleus.

The protein resides in the plastid. It is found in the chloroplast thylakoid membrane. The enzyme catalyses a plastoquinone + NADH + (n+1) H(+)(in) = a plastoquinol + NAD(+) + n H(+)(out). It catalyses the reaction a plastoquinone + NADPH + (n+1) H(+)(in) = a plastoquinol + NADP(+) + n H(+)(out). Functionally, NDH shuttles electrons from NAD(P)H:plastoquinone, via FMN and iron-sulfur (Fe-S) centers, to quinones in the photosynthetic chain and possibly in a chloroplast respiratory chain. The immediate electron acceptor for the enzyme in this species is believed to be plastoquinone. Couples the redox reaction to proton translocation, and thus conserves the redox energy in a proton gradient. The sequence is that of NAD(P)H-quinone oxidoreductase subunit 5, chloroplastic (ndhF) from Nasturtium officinale (Watercress).